A 325-amino-acid polypeptide reads, in one-letter code: GMP reductase (325 aa).

The active-site Thioimidate intermediate is the cysteine 173. 202–225 (IIADGGIRSHGDIAKSVRFGATMV) contributes to the NADP(+) binding site.

Belongs to the IMPDH/GMPR family. GuaC type 2 subfamily.

It catalyses the reaction IMP + NH4(+) + NADP(+) = GMP + NADPH + 2 H(+). Catalyzes the irreversible NADPH-dependent deamination of GMP to IMP. It functions in the conversion of nucleobase, nucleoside and nucleotide derivatives of G to A nucleotides, and in maintaining the intracellular balance of A and G nucleotides. In Delftia acidovorans (strain DSM 14801 / SPH-1), this protein is GMP reductase.